The following is a 209-amino-acid chain: Redox-sensing transcriptional repressor Rex (209 aa).

Positions 16–55 (LYYRFIQNLSLSGKQRVSSAELSEAVKVDSATIRRDFSYF) form a DNA-binding region, H-T-H motif. 90-95 (GVGNLG) contacts NAD(+).

This sequence belongs to the transcriptional regulatory Rex family. Homodimer.

Its subcellular location is the cytoplasm. Its function is as follows. Modulates transcription in response to changes in cellular NADH/NAD(+) redox state. This Bacillus thuringiensis (strain Al Hakam) protein is Redox-sensing transcriptional repressor Rex.